A 156-amino-acid chain; its full sequence is 3-hydroxyacyl-[acyl-carrier-protein] dehydratase FabZ (156 aa).

Histidine 57 is an active-site residue.

Belongs to the thioester dehydratase family. FabZ subfamily.

The protein localises to the cytoplasm. The enzyme catalyses a (3R)-hydroxyacyl-[ACP] = a (2E)-enoyl-[ACP] + H2O. Involved in unsaturated fatty acids biosynthesis. Catalyzes the dehydration of short chain beta-hydroxyacyl-ACPs and long chain saturated and unsaturated beta-hydroxyacyl-ACPs. This Anaeromyxobacter dehalogenans (strain 2CP-C) protein is 3-hydroxyacyl-[acyl-carrier-protein] dehydratase FabZ.